Here is a 64-residue protein sequence, read N- to C-terminus: Makatoxin-1 (64 aa).

In terms of domain architecture, LCN-type CS-alpha/beta spans 2–64; the sequence is RDAYIADSEN…VPIRISGSCR (63 aa). 4 cysteine pairs are disulfide-bonded: cysteine 12–cysteine 63, cysteine 16–cysteine 36, cysteine 22–cysteine 46, and cysteine 26–cysteine 48.

As to expression, expressed by the venom gland.

The protein localises to the secreted. This protein markedly relaxes the rat carbachol-precontracted anococcygeus muscle. This relaxation is inhibited by the inhibitor of nitric oxide (NO) synthase, N-nitro-L-arginine methyl ester (L-NAME), suggesting that the response induced by this protein is NO-mediated. This is Makatoxin-1 from Olivierus martensii (Manchurian scorpion).